Here is a 638-residue protein sequence, read N- to C-terminus: Threonine--tRNA ligase (638 aa).

The region spanning Met-1–Thr-61 is the TGS domain. Residues Asp-242 to Pro-533 form a catalytic region. Zn(2+) contacts are provided by Cys-333, His-384, and His-510.

It belongs to the class-II aminoacyl-tRNA synthetase family. As to quaternary structure, homodimer. Zn(2+) serves as cofactor.

Its subcellular location is the cytoplasm. The catalysed reaction is tRNA(Thr) + L-threonine + ATP = L-threonyl-tRNA(Thr) + AMP + diphosphate + H(+). In terms of biological role, catalyzes the attachment of threonine to tRNA(Thr) in a two-step reaction: L-threonine is first activated by ATP to form Thr-AMP and then transferred to the acceptor end of tRNA(Thr). Also edits incorrectly charged L-seryl-tRNA(Thr). The chain is Threonine--tRNA ligase from Prochlorococcus marinus subsp. pastoris (strain CCMP1986 / NIES-2087 / MED4).